The primary structure comprises 263 residues: 3-methyl-2-oxobutanoate hydroxymethyltransferase (263 aa).

Positions 45 and 84 each coordinate Mg(2+). 3-methyl-2-oxobutanoate is bound by residues 45–46 (DS), Asp84, and Lys112. Position 114 (Glu114) interacts with Mg(2+). Glu180 functions as the Proton acceptor in the catalytic mechanism.

Belongs to the PanB family. Homodecamer; pentamer of dimers. It depends on Mg(2+) as a cofactor.

Its subcellular location is the cytoplasm. The enzyme catalyses 3-methyl-2-oxobutanoate + (6R)-5,10-methylene-5,6,7,8-tetrahydrofolate + H2O = 2-dehydropantoate + (6S)-5,6,7,8-tetrahydrofolate. Its pathway is cofactor biosynthesis; (R)-pantothenate biosynthesis; (R)-pantoate from 3-methyl-2-oxobutanoate: step 1/2. Catalyzes the reversible reaction in which hydroxymethyl group from 5,10-methylenetetrahydrofolate is transferred onto alpha-ketoisovalerate to form ketopantoate. The sequence is that of 3-methyl-2-oxobutanoate hydroxymethyltransferase from Salmonella agona (strain SL483).